A 148-amino-acid chain; its full sequence is uncharacterized protein (148 aa).

The span at 1–17 (MCPPVRQRPAQAPPAKR) shows a compositional bias: low complexity. Disordered regions lie at residues 1–86 (MCPP…VQSP) and 122–148 (RAHR…TSPC). Residues 38-57 (RPPKMQRRPRPPVAKRRRFP) show a composition bias toward basic residues. Residues 137–148 (QRPSPDSQTSPC) are compositionally biased toward polar residues.

Belongs to the Epstein-Barr virus BLLF2 family.

This is an uncharacterized protein from Epstein-Barr virus (strain AG876) (HHV-4).